A 173-amino-acid polypeptide reads, in one-letter code: Ribonuclease P/MRP protein subunit POP5 (173 aa).

It belongs to the eukaryotic/archaeal RNase P protein component 2 family. In terms of assembly, component of nuclear RNase P and RNase MRP complexes. RNase P consists of an RNA moiety and at least 9 protein subunits including POP1, POP3, POP4, POP5, POP6, POP7, POP8, RPP1 and RPR2. RNase MRP complex consists of an RNA moiety and at least 10 protein subunits including POP1, POP3, POP4, POP5, POP6, POP7, POP8, RMP1, RPP1 and SNM1, many of which are shared with the RNase P complex.

The protein resides in the cytoplasm. Its subcellular location is the nucleus. It carries out the reaction Endonucleolytic cleavage of RNA, removing 5'-extranucleotides from tRNA precursor.. Its function is as follows. Component of ribonuclease P, a protein complex that generates mature tRNA molecules by cleaving their 5'-ends. Also a component of RNase MRP, which cleaves pre-rRNA sequences. This is Ribonuclease P/MRP protein subunit POP5 (POP5) from Saccharomyces cerevisiae (strain ATCC 204508 / S288c) (Baker's yeast).